We begin with the raw amino-acid sequence, 598 residues long: MDNVRNFAIIAHIDHGKSTLADRLIEECNGLEAREMTNQVLDSMDIERERGITIKAQTVRLNYTANDGNRYCLNLMDTPGHVDFSYEVSRSLAACEGSLLVIDSSQGVEAQTLANVYKAIDNNHEIIVVLNKVDLPASDPERVKLQVEEIIGIGSSESILISAKTGLGIRDVLEAIITKLPAPQGNINAPLQAILVDSWYDPYLGVVILVRVKNGVLKKGMKIVMMSNNAVYQVDNIGIFTPKKVMTSELSAGEVGFITASMRKMADCKVGDTITEEKKPCGEALPGFKEIHPVVFCSIFPNKTDGFKYLREALEKLHLNDTSFTFEAETSNALGYGFRCGFLGMLHLEVIQERLEREFDLDLTATAPSVIYEVTTQSGETLNIHNPNDMPDSVKIKIVEEPWITATIMVPDQYLGEILSLCDERRGKQEDLSYVGNTMTALLKYKLPLSEVVLDFYDRLKSISKGYASLDWEISNYQESQIDKLSFLVNGEPVDALACIVHKSRSEKRGREICARLRDLIPRQQYKIAIQATVGGKIVARETINPYRKDVTAKLYGGDVTRKMKLLEKQKKGKKRLYSVGNVDIPHNAFIQALKIGD.

The region spanning 2-184 (DNVRNFAIIA…AIITKLPAPQ (183 aa)) is the tr-type G domain. Residues 14–19 (DHGKST) and 131–134 (NKVD) each bind GTP.

This sequence belongs to the TRAFAC class translation factor GTPase superfamily. Classic translation factor GTPase family. LepA subfamily.

The protein localises to the cell membrane. It carries out the reaction GTP + H2O = GDP + phosphate + H(+). Functionally, required for accurate and efficient protein synthesis under certain stress conditions. May act as a fidelity factor of the translation reaction, by catalyzing a one-codon backward translocation of tRNAs on improperly translocated ribosomes. Back-translocation proceeds from a post-translocation (POST) complex to a pre-translocation (PRE) complex, thus giving elongation factor G a second chance to translocate the tRNAs correctly. Binds to ribosomes in a GTP-dependent manner. The polypeptide is Elongation factor 4 (Wolbachia sp. subsp. Brugia malayi (strain TRS)).